Here is a 488-residue protein sequence, read N- to C-terminus: Ammonium transporter 1 member 1 (488 aa).

11 consecutive transmembrane segments (helical) span residues 47–69 (TYLL…LLAG), 90–109 (LFYY…NGFI), 129–148 (FLYQ…GSIA), 153–175 (FVAY…SHWF), 195–217 (VIDF…YGAL), 238–257 (HSAS…WYGF), 281–303 (AVGR…TLFG), 316–333 (VCNG…GCSV), 337–356 (WAAI…FNML), 368–387 (AAQL…GLFA), and 418–440 (HIIQ…FYIL).

It belongs to the ammonia transporter channel (TC 1.A.11.2) family. Root hairs and leaves.

The protein resides in the membrane. Ammonium transporter that may be involved in ammonium uptake from the soil. This is Ammonium transporter 1 member 1 (AMT1-1) from Solanum lycopersicum (Tomato).